The primary structure comprises 383 residues: S-adenosylmethionine synthase (383 aa).

An ATP-binding site is contributed by His-15. Residue Asp-17 participates in Mg(2+) binding. Glu-43 is a binding site for K(+). The L-methionine site is built by Glu-56 and Gln-99. The flexible loop stretch occupies residues 99–109 (QSPDINQGVDR). Residues 164–166 (DAK), 230–231 (RF), Asp-239, 245–246 (RK), Ala-262, and Lys-266 each bind ATP. Asp-239 is an L-methionine binding site. Lys-270 provides a ligand contact to L-methionine.

Belongs to the AdoMet synthase family. As to quaternary structure, homotetramer; dimer of dimers. It depends on Mg(2+) as a cofactor. The cofactor is K(+).

The protein localises to the cytoplasm. The enzyme catalyses L-methionine + ATP + H2O = S-adenosyl-L-methionine + phosphate + diphosphate. Its pathway is amino-acid biosynthesis; S-adenosyl-L-methionine biosynthesis; S-adenosyl-L-methionine from L-methionine: step 1/1. Catalyzes the formation of S-adenosylmethionine (AdoMet) from methionine and ATP. The overall synthetic reaction is composed of two sequential steps, AdoMet formation and the subsequent tripolyphosphate hydrolysis which occurs prior to release of AdoMet from the enzyme. The chain is S-adenosylmethionine synthase from Shewanella baltica (strain OS155 / ATCC BAA-1091).